Consider the following 602-residue polypeptide: Potassium-transporting ATPase potassium-binding subunit (602 aa).

10 helical membrane passes run 3-23, 64-84, 135-155, 178-198, 282-302, 313-333, 418-438, 456-476, 522-542, and 565-585; these read ANNL…AVPV, QYAL…YALL, GLTV…LALI, LYVL…QGVI, FSNF…CLVF, VAVL…ETSA, GLYG…LMIG, VSIV…IAVL, WMTA…VLAI, and LFVV…YMPA.

Belongs to the KdpA family. As to quaternary structure, the system is composed of three essential subunits: KdpA, KdpB and KdpC.

The protein resides in the cell inner membrane. In terms of biological role, part of the high-affinity ATP-driven potassium transport (or Kdp) system, which catalyzes the hydrolysis of ATP coupled with the electrogenic transport of potassium into the cytoplasm. This subunit binds the periplasmic potassium ions and delivers the ions to the membrane domain of KdpB through an intramembrane tunnel. In Burkholderia pseudomallei (strain K96243), this protein is Potassium-transporting ATPase potassium-binding subunit.